The sequence spans 160 residues: Cyclic pyranopterin monophosphate synthase (160 aa).

Substrate contacts are provided by residues 76–78 (LCH) and 114–115 (ME). D129 is an active-site residue.

Belongs to the MoaC family. Homohexamer; trimer of dimers.

It catalyses the reaction (8S)-3',8-cyclo-7,8-dihydroguanosine 5'-triphosphate = cyclic pyranopterin phosphate + diphosphate. It functions in the pathway cofactor biosynthesis; molybdopterin biosynthesis. Catalyzes the conversion of (8S)-3',8-cyclo-7,8-dihydroguanosine 5'-triphosphate to cyclic pyranopterin monophosphate (cPMP). The protein is Cyclic pyranopterin monophosphate synthase of Vibrio cholerae serotype O1 (strain ATCC 39541 / Classical Ogawa 395 / O395).